A 319-amino-acid chain; its full sequence is Transaldolase (319 aa).

Residue K131 is the Schiff-base intermediate with substrate of the active site.

The protein belongs to the transaldolase family. Type 1 subfamily. As to quaternary structure, homodimer.

The protein localises to the cytoplasm. It catalyses the reaction D-sedoheptulose 7-phosphate + D-glyceraldehyde 3-phosphate = D-erythrose 4-phosphate + beta-D-fructose 6-phosphate. It functions in the pathway carbohydrate degradation; pentose phosphate pathway; D-glyceraldehyde 3-phosphate and beta-D-fructose 6-phosphate from D-ribose 5-phosphate and D-xylulose 5-phosphate (non-oxidative stage): step 2/3. Its function is as follows. Transaldolase is important for the balance of metabolites in the pentose-phosphate pathway. The protein is Transaldolase of Wigglesworthia glossinidia brevipalpis.